The chain runs to 102 residues: Urease subunit beta (102 aa).

It belongs to the urease beta subunit family. Heterotrimer of UreA (gamma), UreB (beta) and UreC (alpha) subunits. Three heterotrimers associate to form the active enzyme.

The protein localises to the cytoplasm. It catalyses the reaction urea + 2 H2O + H(+) = hydrogencarbonate + 2 NH4(+). It functions in the pathway nitrogen metabolism; urea degradation; CO(2) and NH(3) from urea (urease route): step 1/1. This Acinetobacter baumannii (strain AB307-0294) protein is Urease subunit beta.